Consider the following 571-residue polypeptide: Sulfite reductase [NADPH] hemoprotein beta-component (571 aa).

Positions 436, 442, 481, and 485 each coordinate [4Fe-4S] cluster. Position 485 (cysteine 485) interacts with siroheme.

Belongs to the nitrite and sulfite reductase 4Fe-4S domain family. As to quaternary structure, alpha(8)-beta(8). The alpha component is a flavoprotein, the beta component is a hemoprotein. Siroheme is required as a cofactor. The cofactor is [4Fe-4S] cluster.

It catalyses the reaction hydrogen sulfide + 3 NADP(+) + 3 H2O = sulfite + 3 NADPH + 4 H(+). It participates in sulfur metabolism; hydrogen sulfide biosynthesis; hydrogen sulfide from sulfite (NADPH route): step 1/1. In terms of biological role, component of the sulfite reductase complex that catalyzes the 6-electron reduction of sulfite to sulfide. This is one of several activities required for the biosynthesis of L-cysteine from sulfate. In Bacillus velezensis (strain DSM 23117 / BGSC 10A6 / LMG 26770 / FZB42) (Bacillus amyloliquefaciens subsp. plantarum), this protein is Sulfite reductase [NADPH] hemoprotein beta-component.